The following is a 226-amino-acid chain: UPF0173 metal-dependent hydrolase GWCH70_2696 (226 aa).

It belongs to the UPF0173 family.

This Geobacillus sp. (strain WCH70) protein is UPF0173 metal-dependent hydrolase GWCH70_2696.